The following is a 170-amino-acid chain: Small ribosomal subunit protein mS41 (170 aa).

The transit peptide at 1 to 20 directs the protein to the mitochondrion; it reads MFRTLLSSTVRSIQLKPVTS.

Belongs to the mitochondrion-specific ribosomal protein mS41 family. As to quaternary structure, component of the mitochondrial small ribosomal subunit (mt-SSU).

It is found in the mitochondrion. In terms of biological role, component of the mitochondrial ribosome (mitoribosome), a dedicated translation machinery responsible for the synthesis of mitochondrial genome-encoded proteins, including at least some of the essential transmembrane subunits of the mitochondrial respiratory chain. The mitoribosomes are attached to the mitochondrial inner membrane and translation products are cotranslationally integrated into the membrane. mS41 is involved in telomere length regulation. In Candida albicans (strain SC5314 / ATCC MYA-2876) (Yeast), this protein is Small ribosomal subunit protein mS41 (FYV4).